The following is a 612-amino-acid chain: Actin-binding LIM protein 2 (612 aa).

LIM zinc-binding domains are found at residues I22–T81, T81–G141, R151–I210, and I210–E270. Residues C83, C86, H103, C106, C109, C112, C131, and C134 each contribute to the Zn(2+) site. Zn(2+) contacts are provided by C212, C215, H232, C235, C238, C241, H260, and C263. The segment covering T269–T278 has biased composition (basic and acidic residues). Disordered regions lie at residues T269–P295 and A341–Y433. Residues S279 to P295 are compositionally biased toward low complexity. Phosphoserine occurs at positions 282, 294, 351, 356, 365, and 368. Residues S364 to S373 are compositionally biased toward low complexity. A compositionally biased stretch (polar residues) spans S394–Q416. S453 is modified (phosphoserine). Positions A471 to R498 are disordered. The residue at position 473 (T473) is a Phosphothreonine. Phosphoserine occurs at positions 477 and 579. Positions S477–S489 are enriched in low complexity. The HP domain occupies T544 to F612.

Interacts with F-actin and ABRA. Expressed in brain. Highly expressed in caudate/putamen, moderately expressed in the olfactory bulb. In the hippocampus, expressed in the CA1, CA2 and CA3 fields. In the cerebellum, expressed in Purkinje cells.

The protein localises to the cytoplasm. Functionally, may act as scaffold protein. May stimulate ABRA activity and ABRA-dependent SRF transcriptional activity. This is Actin-binding LIM protein 2 (Ablim2) from Mus musculus (Mouse).